The chain runs to 341 residues: N-acetyl-gamma-glutamyl-phosphate reductase (341 aa).

The active site involves cysteine 145.

The protein belongs to the NAGSA dehydrogenase family. Type 1 subfamily.

Its subcellular location is the cytoplasm. It catalyses the reaction N-acetyl-L-glutamate 5-semialdehyde + phosphate + NADP(+) = N-acetyl-L-glutamyl 5-phosphate + NADPH + H(+). It functions in the pathway amino-acid biosynthesis; L-arginine biosynthesis; N(2)-acetyl-L-ornithine from L-glutamate: step 3/4. Functionally, catalyzes the NADPH-dependent reduction of N-acetyl-5-glutamyl phosphate to yield N-acetyl-L-glutamate 5-semialdehyde. The polypeptide is N-acetyl-gamma-glutamyl-phosphate reductase (Methanothrix thermoacetophila (strain DSM 6194 / JCM 14653 / NBRC 101360 / PT) (Methanosaeta thermophila)).